The chain runs to 179 residues: MSTGSLSDVEDFQEVEMLECDGIKLDPNKEFGISNDSNEESSTCDNGSPKKGRGTSGKRRKAPSKKSPLGNINQEGKQVQRNAANARERARMRVLSKAFSRLKTTLPWVPPDTKLSKLDTLRLASSYIAHLRQILANDKYENGYIHPVNLTWPFMVAGKPENDLKEVVSTSRLCGPTAS.

Positions 23 to 87 (IKLDPNKEFG…QVQRNAANAR (65 aa)) are disordered. A compositionally biased stretch (polar residues) spans 34–46 (SNDSNEESSTCDN). The span at 50–64 (KKGRGTSGKRRKAPS) shows a compositional bias: basic residues. Polar residues predominate over residues 70–80 (GNINQEGKQVQ). Residues 79 to 131 (VQRNAANARERARMRVLSKAFSRLKTTLPWVPPDTKLSKLDTLRLASSYIAHL) enclose the bHLH domain.

Efficient DNA binding requires dimerization with another bHLH protein.

Its subcellular location is the nucleus. Its function is as follows. Involved in epithelial-mesenchymal interactions in kidney and lung morphogenesis that include epithelial differentiation and branching morphogenesis. This Xenopus tropicalis (Western clawed frog) protein is Transcription factor 21 (tcf21).